Consider the following 324-residue polypeptide: Porphobilinogen deaminase 1 (324 aa).

At Cys249 the chain carries S-(dipyrrolylmethanemethyl)cysteine.

Belongs to the HMBS family. Monomer. Dipyrromethane is required as a cofactor.

The enzyme catalyses 4 porphobilinogen + H2O = hydroxymethylbilane + 4 NH4(+). The protein operates within porphyrin-containing compound metabolism; protoporphyrin-IX biosynthesis; coproporphyrinogen-III from 5-aminolevulinate: step 2/4. Functionally, tetrapolymerization of the monopyrrole PBG into the hydroxymethylbilane pre-uroporphyrinogen in several discrete steps. In Streptomyces avermitilis (strain ATCC 31267 / DSM 46492 / JCM 5070 / NBRC 14893 / NCIMB 12804 / NRRL 8165 / MA-4680), this protein is Porphobilinogen deaminase 1 (hemC1).